Consider the following 144-residue polypeptide: MESPLGSDLARLVRIWRALIDHRLKPLELTQTHWVTLHNIHQLPPDQSQIQLAKAIGIEQPSLVRTLDQLEEKGLISRQTCASDRRAKRIKLTEKAEPLISEMEAVINKTRAEILHGISAEELEQLIKLIAKLEHNIIELQAKG.

Positions 2 to 135 constitute an HTH marR-type domain; the sequence is ESPLGSDLAR…LIKLIAKLEH (134 aa). A DNA-binding region (H-T-H motif) is located at residues 49–72; the sequence is QIQLAKAIGIEQPSLVRTLDQLEE.

The protein belongs to the SlyA family. Homodimer.

In terms of biological role, transcription regulator that can specifically activate or repress expression of target genes. This is Transcriptional regulator SlyA from Escherichia coli O127:H6 (strain E2348/69 / EPEC).